Here is a 167-residue protein sequence, read N- to C-terminus: NADH-ubiquinone oxidoreductase chain 6 (167 aa).

The next 4 membrane-spanning stretches (helical) occupy residues 5-25 (IIML…TIYL), 34-54 (MLLI…FTMC), 60-80 (LILM…SYFI), and 138-158 (FFIM…ITYI).

Belongs to the complex I subunit 6 family.

The protein resides in the mitochondrion membrane. The catalysed reaction is a ubiquinone + NADH + 5 H(+)(in) = a ubiquinol + NAD(+) + 4 H(+)(out). In terms of biological role, core subunit of the mitochondrial membrane respiratory chain NADH dehydrogenase (Complex I) that is believed to belong to the minimal assembly required for catalysis. Complex I functions in the transfer of electrons from NADH to the respiratory chain. The immediate electron acceptor for the enzyme is believed to be ubiquinone. In Apis mellifera ligustica (Common honeybee), this protein is NADH-ubiquinone oxidoreductase chain 6 (ND6).